Reading from the N-terminus, the 729-residue chain is Catalase-peroxidase 1 (729 aa).

Positions W98–Y226 form a cross-link, tryptophyl-tyrosyl-methioninium (Trp-Tyr) (with M-252). The active-site Proton acceptor is H99. The tryptophyl-tyrosyl-methioninium (Tyr-Met) (with W-98) cross-link spans Y226 to M252. H267 contributes to the heme b binding site.

The protein belongs to the peroxidase family. Peroxidase/catalase subfamily. In terms of assembly, homodimer or homotetramer. The cofactor is heme b. Post-translationally, formation of the three residue Trp-Tyr-Met cross-link is important for the catalase, but not the peroxidase activity of the enzyme.

It catalyses the reaction H2O2 + AH2 = A + 2 H2O. It carries out the reaction 2 H2O2 = O2 + 2 H2O. In terms of biological role, bifunctional enzyme with both catalase and broad-spectrum peroxidase activity. This is Catalase-peroxidase 1 from Cellvibrio japonicus (strain Ueda107) (Pseudomonas fluorescens subsp. cellulosa).